We begin with the raw amino-acid sequence, 423 residues long: UPF0229 protein Pput_0430 (423 aa).

Residues 81–108 (EFTAGEHIPRPQGGGGGGGRGKAGNSGE) are disordered. Gly residues predominate over residues 92–107 (QGGGGGGGRGKAGNSG).

Belongs to the UPF0229 family.

The sequence is that of UPF0229 protein Pput_0430 from Pseudomonas putida (strain ATCC 700007 / DSM 6899 / JCM 31910 / BCRC 17059 / LMG 24140 / F1).